A 91-amino-acid polypeptide reads, in one-letter code: YcgL domain-containing protein ETA_15380 (91 aa).

The region spanning 1–85 (MFCVIYRSPQ…PLESLLKIHL (85 aa)) is the YcgL domain.

This is YcgL domain-containing protein ETA_15380 from Erwinia tasmaniensis (strain DSM 17950 / CFBP 7177 / CIP 109463 / NCPPB 4357 / Et1/99).